The sequence spans 658 residues: Phosphomethylpyrimidine synthase (658 aa).

Residues 1–22 are disordered; the sequence is MNNSTDAVNPAKKPQTRREKRE. Substrate contacts are provided by residues Asn-248, Met-277, Tyr-306, His-342, 362–364, 403–406, and Glu-442; these read SRG and DGLR. His-446 provides a ligand contact to Zn(2+). Residue Tyr-469 coordinates substrate. His-510 is a Zn(2+) binding site. Positions 590, 593, and 598 each coordinate [4Fe-4S] cluster.

Belongs to the ThiC family. In terms of assembly, homodimer. [4Fe-4S] cluster serves as cofactor.

It catalyses the reaction 5-amino-1-(5-phospho-beta-D-ribosyl)imidazole + S-adenosyl-L-methionine = 4-amino-2-methyl-5-(phosphooxymethyl)pyrimidine + CO + 5'-deoxyadenosine + formate + L-methionine + 3 H(+). The protein operates within cofactor biosynthesis; thiamine diphosphate biosynthesis. Catalyzes the synthesis of the hydroxymethylpyrimidine phosphate (HMP-P) moiety of thiamine from aminoimidazole ribotide (AIR) in a radical S-adenosyl-L-methionine (SAM)-dependent reaction. The polypeptide is Phosphomethylpyrimidine synthase (Colwellia psychrerythraea (strain 34H / ATCC BAA-681) (Vibrio psychroerythus)).